The following is a 336-amino-acid chain: Ornithine carbamoyltransferase, catabolic (336 aa).

Residues 57–60, Gln-84, Arg-108, and 135–138 contribute to the carbamoyl phosphate site; these read STRT and HPTQ. L-ornithine contacts are provided by residues Asn-168, Asp-232, and 236 to 237; that span reads SM. Carbamoyl phosphate-binding positions include 274–275 and Arg-321; that span reads CL.

Belongs to the aspartate/ornithine carbamoyltransferase superfamily. OTCase family. In terms of assembly, nonameric or dodecamer (tetramer of trimers).

It localises to the cytoplasm. It carries out the reaction carbamoyl phosphate + L-ornithine = L-citrulline + phosphate + H(+). It participates in amino-acid degradation; L-arginine degradation via ADI pathway; carbamoyl phosphate from L-arginine: step 2/2. With respect to regulation, inhibited by 2-aminopentanoic acid (norvaline). Activated by phosphate and nucleoside monophosphates such as AMP, GMP, CMP, UMP. Allosterically inhibited by the polyamines such as spermidine and putrescine. Involved in the catabolism of arginine. Catalyzes the phosphorolysis of citrulline, the reverse reaction of the biosynthetic one, yielding ornithine and carbamoyl phosphate which serve to generate ATP from ADP. This catabolic OTCase does not carry out the biosynthetic reaction because of a poor affinity and a marked cooperativity for carbamoyl phosphate. This is Ornithine carbamoyltransferase, catabolic from Pseudomonas aeruginosa (strain ATCC 15692 / DSM 22644 / CIP 104116 / JCM 14847 / LMG 12228 / 1C / PRS 101 / PAO1).